The following is a 217-amino-acid chain: N-(5'-phosphoribosyl)anthranilate isomerase (217 aa).

It belongs to the TrpF family.

The enzyme catalyses N-(5-phospho-beta-D-ribosyl)anthranilate = 1-(2-carboxyphenylamino)-1-deoxy-D-ribulose 5-phosphate. Its pathway is amino-acid biosynthesis; L-tryptophan biosynthesis; L-tryptophan from chorismate: step 3/5. The protein is N-(5'-phosphoribosyl)anthranilate isomerase of Synechococcus elongatus (strain ATCC 33912 / PCC 7942 / FACHB-805) (Anacystis nidulans R2).